A 179-amino-acid polypeptide reads, in one-letter code: MARLKDMYKSEVAPAMMEKFGYKSVMEIPKIEKIVVNMGLGDSKDNPKGLEAAVKELGIITGQKPVVTRAKKSVANFKLRQGMPIGAKVTLRGEKMYEFADRLLNIALPRVRDFRGVNPNAFDGRGNYALGIKEQLIFPEIEYDKVEKLHGMDIIFVTTAKTDEESRELLKLMGMPFAK.

The protein belongs to the universal ribosomal protein uL5 family. As to quaternary structure, part of the 50S ribosomal subunit; part of the 5S rRNA/L5/L18/L25 subcomplex. Contacts the 5S rRNA and the P site tRNA. Forms a bridge to the 30S subunit in the 70S ribosome.

Functionally, this is one of the proteins that bind and probably mediate the attachment of the 5S RNA into the large ribosomal subunit, where it forms part of the central protuberance. In the 70S ribosome it contacts protein S13 of the 30S subunit (bridge B1b), connecting the 2 subunits; this bridge is implicated in subunit movement. Contacts the P site tRNA; the 5S rRNA and some of its associated proteins might help stabilize positioning of ribosome-bound tRNAs. The protein is Large ribosomal subunit protein uL5 of Alkaliphilus oremlandii (strain OhILAs) (Clostridium oremlandii (strain OhILAs)).